A 241-amino-acid polypeptide reads, in one-letter code: Uridylate kinase (241 aa).

12–15 (KISG) serves as a coordination point for ATP. The involved in allosteric activation by GTP stretch occupies residues 20–25 (GDKGNG). A UMP-binding site is contributed by Gly-54. Residues Gly-55 and Arg-59 each coordinate ATP. UMP is bound by residues Asp-74 and 135 to 142 (TGNPYFST). Positions 163, 169, and 172 each coordinate ATP.

It belongs to the UMP kinase family. In terms of assembly, homohexamer.

It is found in the cytoplasm. It carries out the reaction UMP + ATP = UDP + ADP. It functions in the pathway pyrimidine metabolism; CTP biosynthesis via de novo pathway; UDP from UMP (UMPK route): step 1/1. Its activity is regulated as follows. Allosterically activated by GTP. Inhibited by UTP. In terms of biological role, catalyzes the reversible phosphorylation of UMP to UDP. The sequence is that of Uridylate kinase from Lactobacillus helveticus (strain DPC 4571).